A 439-amino-acid polypeptide reads, in one-letter code: Microfibrillar-associated protein 1 (439 aa).

The span at 1–17 shows a compositional bias: polar residues; it reads MSVPSSLMKQPPIQSTA. The disordered stretch occupies residues 1 to 200; it reads MSVPSSLMKQ…SEDEMEPRLK (200 aa). At S2 the chain carries N-acetylserine. A compositionally biased stretch (basic and acidic residues) spans 23-34; it reads RNEKGEISMEKV. Phosphoserine occurs at positions 52 and 53. Positions 61–70 are enriched in basic and acidic residues; that stretch reads QFIKKAKEQE. Residue K67 forms a Glycyl lysine isopeptide (Lys-Gly) (interchain with G-Cter in SUMO2) linkage. Residues 71–81 show a composition bias toward acidic residues; it reads AEPEEQEEDSS. Phosphoserine is present on residues S94, S116, S118, S132, and S133. Acidic residues-rich tracts occupy residues 112 to 122 and 131 to 144; these read VVGESDSEVEG and DSSE…DEEE. Positions 145–163 are enriched in basic and acidic residues; the sequence is IERRRGMMRQRAQERKNEE. Residues 178-195 show a composition bias toward acidic residues; the sequence is ESESESEYEEYTDSEDEM. K249 participates in a covalent cross-link: Glycyl lysine isopeptide (Lys-Gly) (interchain with G-Cter in SUMO2). Position 267 is a phosphothreonine (T267). K357 participates in a covalent cross-link: Glycyl lysine isopeptide (Lys-Gly) (interchain with G-Cter in SUMO2). Residue S361 is modified to Phosphoserine. Glycyl lysine isopeptide (Lys-Gly) (interchain with G-Cter in SUMO2) cross-links involve residues K371, K381, K415, and K418. S432 carries the post-translational modification Phosphoserine.

It belongs to the MFAP1 family. In terms of assembly, component of the spliceosome B complex. Interacts with PRPF38A (via N-terminal interaction domain).

Its subcellular location is the nucleus. In terms of biological role, involved in pre-mRNA splicing as a component of the spliceosome. The protein is Microfibrillar-associated protein 1 of Bos taurus (Bovine).